The sequence spans 175 residues: Cytidylate kinase (175 aa).

7 to 15 (GQPGSGKTS) lines the ATP pocket.

The protein belongs to the cytidylate kinase family. Type 2 subfamily.

Its subcellular location is the cytoplasm. It catalyses the reaction CMP + ATP = CDP + ADP. It carries out the reaction dCMP + ATP = dCDP + ADP. This is Cytidylate kinase from Methanocella arvoryzae (strain DSM 22066 / NBRC 105507 / MRE50).